A 285-amino-acid chain; its full sequence is NAD kinase (285 aa).

The Proton acceptor role is filled by Asp66. NAD(+) contacts are provided by residues Asp66–Gly67, Asn137–Asp138, Arg148, Arg165, Asp167, and Thr178–Ser183.

The protein belongs to the NAD kinase family. It depends on a divalent metal cation as a cofactor.

Its subcellular location is the cytoplasm. It catalyses the reaction NAD(+) + ATP = ADP + NADP(+) + H(+). Functionally, involved in the regulation of the intracellular balance of NAD and NADP, and is a key enzyme in the biosynthesis of NADP. Catalyzes specifically the phosphorylation on 2'-hydroxyl of the adenosine moiety of NAD to yield NADP. This chain is NAD kinase, found in Chlorobium phaeobacteroides (strain DSM 266 / SMG 266 / 2430).